A 632-amino-acid chain; its full sequence is Extracellular metalloproteinase 5 (632 aa).

A signal peptide spans 1-20 (MHGLLLAAGLLSLPLHVLAH). Positions 21-244 (PQPGTSLAGR…HNVVDYVSHA (224 aa)) are excised as a propeptide. Residue asparagine 284 is glycosylated (N-linked (GlcNAc...) asparagine). Histidine 427 lines the Zn(2+) pocket. Glutamate 428 is a catalytic residue. Histidine 431 provides a ligand contact to Zn(2+). Asparagine 591 and asparagine 620 each carry an N-linked (GlcNAc...) asparagine glycan.

Belongs to the peptidase M36 family. It depends on Zn(2+) as a cofactor.

The protein resides in the secreted. Functionally, secreted metalloproteinase probably acting as a virulence factor. This Arthroderma otae (strain ATCC MYA-4605 / CBS 113480) (Microsporum canis) protein is Extracellular metalloproteinase 5 (MEP5).